The following is a 175-amino-acid chain: O-acetyl-ADP-ribose deacetylase (175 aa).

The 175-residue stretch at 1–175 (MAVQPEVILG…IYRRLLASYP (175 aa)) folds into the Macro domain. Residues 11–12 (DI), N25, 33–35 (GVD), and 122–126 (STGVY) contribute to the substrate site. D35 functions as the Proton acceptor in the catalytic mechanism.

It belongs to the MacroD-type family. YmdB subfamily. In terms of assembly, homodimer. Interacts with RNase III.

It catalyses the reaction 3''-O-acetyl-ADP-D-ribose + H2O = ADP-D-ribose + acetate + H(+). The enzyme catalyses 2''-O-acetyl-ADP-D-ribose + H2O = ADP-D-ribose + acetate + H(+). Its function is as follows. Deacetylates O-acetyl-ADP ribose to yield ADP-ribose and free acetate. Down-regulates ribonuclease 3 (RNase III) activity. Acts by interacting directly with the region of the ribonuclease that is required for dimerization/activation. The chain is O-acetyl-ADP-ribose deacetylase from Klebsiella pneumoniae (strain 342).